The chain runs to 457 residues: tRNA modification GTPase MnmE (457 aa).

Arg-23, Glu-85, and Arg-124 together coordinate (6S)-5-formyl-5,6,7,8-tetrahydrofolate. The TrmE-type G domain occupies 220–376 (GALVVLAGQV…LVTAIRAAVL (157 aa)). Asn-230 contacts K(+). GTP-binding positions include 230-235 (NAGKSS), 249-255 (TDLPGTT), and 274-277 (DTAG). Ser-234 is a Mg(2+) binding site. Residues Thr-249, Leu-251, and Thr-254 each coordinate K(+). Residue Thr-255 participates in Mg(2+) binding. Lys-457 contacts (6S)-5-formyl-5,6,7,8-tetrahydrofolate.

Belongs to the TRAFAC class TrmE-Era-EngA-EngB-Septin-like GTPase superfamily. TrmE GTPase family. As to quaternary structure, homodimer. Heterotetramer of two MnmE and two MnmG subunits. K(+) is required as a cofactor.

It is found in the cytoplasm. Functionally, exhibits a very high intrinsic GTPase hydrolysis rate. Involved in the addition of a carboxymethylaminomethyl (cmnm) group at the wobble position (U34) of certain tRNAs, forming tRNA-cmnm(5)s(2)U34. The polypeptide is tRNA modification GTPase MnmE (Nitratidesulfovibrio vulgaris (strain ATCC 29579 / DSM 644 / CCUG 34227 / NCIMB 8303 / VKM B-1760 / Hildenborough) (Desulfovibrio vulgaris)).